We begin with the raw amino-acid sequence, 83 residues long: Small ribosomal subunit protein bS18A (83 aa).

The protein belongs to the bacterial ribosomal protein bS18 family. Part of the 30S ribosomal subunit. Forms a tight heterodimer with protein bS6.

Binds as a heterodimer with protein bS6 to the central domain of the 16S rRNA, where it helps stabilize the platform of the 30S subunit. This is Small ribosomal subunit protein bS18A from Mycolicibacterium vanbaalenii (strain DSM 7251 / JCM 13017 / BCRC 16820 / KCTC 9966 / NRRL B-24157 / PYR-1) (Mycobacterium vanbaalenii).